The following is a 543-amino-acid chain: ADP,ATP carrier protein 3 (543 aa).

A run of 10 helical transmembrane segments spans residues 46 to 66, 86 to 106, 111 to 131, 175 to 195, 209 to 229, 243 to 263, 306 to 326, 346 to 366, 382 to 402, and 504 to 524; these read VLYLSLLFGVITMVHTIMGNL, IFLPPCSLLFIWAIQLGLSLF, MFDITLILFSGCYILFGLVVW, FLFLCSEMWGALVVSYFFNIF, ISVYNISNAISIFLSAVLTLV, ELGFRILILVLGSTVIGILAL, LLIAISLNVLLYGVTSTLVEA, FANFYNGLEQIIIAISLLVVI, LASLPIVIAMFSLFSVFLIAF, and SVSGILIVIIIAMWYFILKYL.

This sequence belongs to the ADP/ATP translocase tlc family.

The protein resides in the mitosome membrane. Functionally, ATP transporter involved in the uptake of ATP from the parasite cell cytoplasm into the mitosome matrix. Equilibrates nucleotide pools across a concentration gradient between both sides of the mitosome membrane. This chain is ADP,ATP carrier protein 3 (NTT3), found in Encephalitozoon cuniculi (strain GB-M1) (Microsporidian parasite).